The following is an 859-amino-acid chain: Tripartite terminase subunit 1 (859 aa).

The C3H1-type zinc-finger motif lies at 231–259 (CCICLDELSVTANQGDTIYKRLGYSVCDH). A compositionally biased stretch (basic and acidic residues) spans 512 to 525 (TRPRADKAGGRAED). Residues 512 to 542 (TRPRADKAGGRAEDGAGDCDDEGYPGAADAT) form a disordered region. Position 782 to 789 (782 to 789 (FESIFQCG)) interacts with ATP.

It belongs to the herpesviridae TRM1 protein family. In terms of assembly, associates with TRM2 and TRM3 to form the tripartite terminase complex. Interacts with portal protein.

The protein localises to the host nucleus. In terms of biological role, component of the molecular motor that translocates viral genomic DNA in empty capsid during DNA packaging. Forms a tripartite terminase complex together with TRM2 and TRM3 in the host cytoplasm. Once the complex reaches the host nucleus, it interacts with the capsid portal vertex. This portal forms a ring in which genomic DNA is translocated into the capsid. TRM1 carries an endonuclease activity that plays an important role for the cleavage of concatemeric viral DNA into unit length genomes. The polypeptide is Tripartite terminase subunit 1 (Amazona oratrix (yellow-headed parrot)).